The following is a 481-amino-acid chain: Putative F-box/FBD/LRR-repeat protein At5g25850 (481 aa).

In terms of domain architecture, F-box spans 19–69; sequence INRLSQLSDPLICQILSHLPIKEVVTTSVLSTRWKNIWLSVPSLELIYSIF. LRR repeat units follow at residues 123–151, 173–198, and 328–356; these read VRRV…KLFH, VWFP…KIDV, and HVTL…IVAF. The 52-residue stretch at 401 to 452 folds into the FBD domain; it reads QLSFSSVPKCLLSSLQFVELNAQILRFDGEILNLAKYFLENSSILQKLTLHP.

This Arabidopsis thaliana (Mouse-ear cress) protein is Putative F-box/FBD/LRR-repeat protein At5g25850.